The sequence spans 363 residues: Protein-arginine kinase (363 aa).

A Phosphagen kinase C-terminal domain is found at 24–254 (IVLSSRIRLA…AQLIEQERSA (231 aa)). Residues 27–31 (SSRIR), His92, Arg125, 176–180 (RASVM), and 207–212 (RGIYGE) contribute to the ATP site. An RDXXRA motif of the pArg binding pocket involved in allosteric regulation motif is present at residues 337 to 342 (RDARRA).

It belongs to the ATP:guanido phosphotransferase family.

It catalyses the reaction L-arginyl-[protein] + ATP = N(omega)-phospho-L-arginyl-[protein] + ADP + H(+). Appears to be allosterically activated by the binding of pArg-containing polypeptides to the pArg-binding pocket localized in the C-terminal domain of McsB. In terms of biological role, catalyzes the specific phosphorylation of arginine residues in a large number of proteins. Is part of the bacterial stress response system. Protein arginine phosphorylation has a physiologically important role and is involved in the regulation of many critical cellular processes, such as protein homeostasis, motility, competence, and stringent and stress responses, by regulating gene expression and protein activity. This chain is Protein-arginine kinase, found in Bacillus velezensis (strain DSM 23117 / BGSC 10A6 / LMG 26770 / FZB42) (Bacillus amyloliquefaciens subsp. plantarum).